The chain runs to 289 residues: Bifunctional protein FolD (289 aa).

Residues 166–168 (GVS) and Ile-232 each bind NADP(+).

It belongs to the tetrahydrofolate dehydrogenase/cyclohydrolase family. Homodimer.

It catalyses the reaction (6R)-5,10-methylene-5,6,7,8-tetrahydrofolate + NADP(+) = (6R)-5,10-methenyltetrahydrofolate + NADPH. The catalysed reaction is (6R)-5,10-methenyltetrahydrofolate + H2O = (6R)-10-formyltetrahydrofolate + H(+). It participates in one-carbon metabolism; tetrahydrofolate interconversion. Functionally, catalyzes the oxidation of 5,10-methylenetetrahydrofolate to 5,10-methenyltetrahydrofolate and then the hydrolysis of 5,10-methenyltetrahydrofolate to 10-formyltetrahydrofolate. The protein is Bifunctional protein FolD of Methylobacillus flagellatus (strain ATCC 51484 / DSM 6875 / VKM B-1610 / KT).